A 212-amino-acid polypeptide reads, in one-letter code: High frequency lysogenization protein HflD homolog (212 aa).

Belongs to the HflD family.

Its subcellular location is the cytoplasm. It localises to the cell inner membrane. The polypeptide is High frequency lysogenization protein HflD homolog (Pectobacterium carotovorum subsp. carotovorum (strain PC1)).